The chain runs to 239 residues: Ribosomal RNA large subunit methyltransferase E (239 aa).

The disordered stretch occupies residues 1–20; that stretch reads MTKAPIAGNRTGRKLGQRVK. Basic residues predominate over residues 11–20; that stretch reads TGRKLGQRVK. S-adenosyl-L-methionine contacts are provided by Gly-81, Trp-83, Asp-104, Asp-120, and Asp-144. Catalysis depends on Lys-184, which acts as the Proton acceptor.

It belongs to the class I-like SAM-binding methyltransferase superfamily. RNA methyltransferase RlmE family.

Its subcellular location is the cytoplasm. It catalyses the reaction uridine(2552) in 23S rRNA + S-adenosyl-L-methionine = 2'-O-methyluridine(2552) in 23S rRNA + S-adenosyl-L-homocysteine + H(+). Functionally, specifically methylates the uridine in position 2552 of 23S rRNA at the 2'-O position of the ribose in the fully assembled 50S ribosomal subunit. The protein is Ribosomal RNA large subunit methyltransferase E of Rhizobium johnstonii (strain DSM 114642 / LMG 32736 / 3841) (Rhizobium leguminosarum bv. viciae).